Here is a 132-residue protein sequence, read N- to C-terminus: Cytochrome B5 isoform C (132 aa).

A Cytochrome b5 heme-binding domain is found at 2-78 (ANLISFHDVA…MKKYCIGDVD (77 aa)). Residues histidine 37 and histidine 61 each coordinate heme. The chain crosses the membrane as a helical span at residues 110-129 (LLIYLIPLLILGVAFALRFY).

This sequence belongs to the cytochrome b5 family. Interacts with CER1, BI-1, FAH1 and FAH2.

It is found in the endoplasmic reticulum membrane. Membrane bound hemoprotein which function as an electron carrier for several membrane bound oxygenases, including fatty acid desaturases. This chain is Cytochrome B5 isoform C, found in Arabidopsis thaliana (Mouse-ear cress).